Here is a 1457-residue protein sequence, read N- to C-terminus: DNA-directed RNA polymerase III subunit RPC1 (1457 aa).

Zn(2+) contacts are provided by Cys67, Cys70, Cys77, His80, Cys107, Cys110, and Cys154. 3 residues coordinate Mg(2+): Asp508, Asp510, and Asp512. The bridging helix stretch occupies residues 854–866 (PPEFLFHSISGRE).

Belongs to the RNA polymerase beta' chain family. Component of the RNA polymerase III (Pol III) complex consisting of 17 subunits.

It is found in the nucleus. The catalysed reaction is RNA(n) + a ribonucleoside 5'-triphosphate = RNA(n+1) + diphosphate. DNA-dependent RNA polymerase catalyzes the transcription of DNA into RNA using the four ribonucleoside triphosphates as substrates. Largest and catalytic core component of RNA polymerase III which synthesizes small RNAs, such as 5S rRNA and tRNAs. Forms the polymerase active center together with the second largest subunit. A single-stranded DNA template strand of the promoter is positioned within the central active site cleft of Pol III. A bridging helix emanates from RPC1 and crosses the cleft near the catalytic site and is thought to promote translocation of Pol III by acting as a ratchet that moves the RNA-DNA hybrid through the active site by switching from straight to bent conformations at each step of nucleotide addition. This chain is DNA-directed RNA polymerase III subunit RPC1 (RPC1), found in Debaryomyces hansenii (strain ATCC 36239 / CBS 767 / BCRC 21394 / JCM 1990 / NBRC 0083 / IGC 2968) (Yeast).